The chain runs to 714 residues: Angiogenic factor with G patch and FHA domains 1 (714 aa).

A compositionally biased stretch (pro residues) spans 1-18 (MASEAPSPPRSPPPPTSP). Disordered stretches follow at residues 1–22 (MASE…EPEL), 259–307 (QPYP…HTSC), and 322–384 (IGIH…SYDE). At Ala-2 the chain carries N-acetylalanine. Phosphoserine occurs at positions 7 and 11. The stretch at 18-88 (PEPELAQLRR…QRGRNEDNKK (71 aa)) forms a coiled coil. Residues 279 to 298 (KDPDSSATNEEKDLNSEDQK) are compositionally biased toward basic and acidic residues. The segment covering 335–355 (VPTSGNTIESPLHENISNSTS) has biased composition (polar residues). Ser-344 carries the post-translational modification Phosphoserine. Over residues 364 to 383 (TDSEPEEGEITDSQTEDSYD) the composition is skewed to acidic residues. An FHA domain is found at 434-487 (ATIGREKDMEHTLRIPEVGVSKFHAEIYFDHDLQSYVLVDQGSQNGTIVNGKQI). The span at 586-609 (KYKDRAGKRREQVGSEGTFQRDDA) shows a compositional bias: basic and acidic residues. 2 disordered regions span residues 586-617 (KYKD…HSEI) and 655-714 (RTHA…GTLE). One can recognise a G-patch domain in the interval 619–665 (DSNKGRKMLEKMGWKKGEGLGKDGGGMKTPIQLQLRRTHAGLGTGKP). Lys-664 carries the post-translational modification N6-acetyllysine. Residues 680 to 690 (KNWDKARERFT) show a composition bias toward basic and acidic residues.

In terms of assembly, interacts with the secreted angiogenic factor TNFSF12. Widely expressed. Expressed in endothelial cells, vascular smooth muscle cells and osteoblasts. Expressed in umbilical vein endothelial cells and microvascular endothelial cells.

Its subcellular location is the cytoplasm. The protein localises to the secreted. Promotes angiogenesis and the proliferation of endothelial cells. Able to bind to endothelial cells and promote cell proliferation, suggesting that it may act in an autocrine fashion. The chain is Angiogenic factor with G patch and FHA domains 1 (AGGF1) from Homo sapiens (Human).